The sequence spans 185 residues: Elongation factor P (185 aa).

The protein belongs to the elongation factor P family.

The protein localises to the cytoplasm. It functions in the pathway protein biosynthesis; polypeptide chain elongation. Functionally, involved in peptide bond synthesis. Stimulates efficient translation and peptide-bond synthesis on native or reconstituted 70S ribosomes in vitro. Probably functions indirectly by altering the affinity of the ribosome for aminoacyl-tRNA, thus increasing their reactivity as acceptors for peptidyl transferase. This chain is Elongation factor P, found in Pseudothermotoga lettingae (strain ATCC BAA-301 / DSM 14385 / NBRC 107922 / TMO) (Thermotoga lettingae).